Consider the following 646-residue polypeptide: Acetyl-coenzyme A synthetase (646 aa).

CoA-binding positions include 190–193 and T309; that span reads RAGK. Residues 385-387, 409-414, D498, and R513 each bind ATP; these read GEP and DTWWQT. Residue S521 participates in CoA binding. R524 lines the ATP pocket. Mg(2+) contacts are provided by V535, H537, and V540. CoA is bound at residue R582. N6-acetyllysine is present on K607.

Belongs to the ATP-dependent AMP-binding enzyme family. Requires Mg(2+) as cofactor. Acetylated. Deacetylation by the SIR2-homolog deacetylase activates the enzyme.

The catalysed reaction is acetate + ATP + CoA = acetyl-CoA + AMP + diphosphate. In terms of biological role, catalyzes the conversion of acetate into acetyl-CoA (AcCoA), an essential intermediate at the junction of anabolic and catabolic pathways. AcsA undergoes a two-step reaction. In the first half reaction, AcsA combines acetate with ATP to form acetyl-adenylate (AcAMP) intermediate. In the second half reaction, it can then transfer the acetyl group from AcAMP to the sulfhydryl group of CoA, forming the product AcCoA. In Pseudoalteromonas atlantica (strain T6c / ATCC BAA-1087), this protein is Acetyl-coenzyme A synthetase.